A 178-amino-acid polypeptide reads, in one-letter code: Inorganic pyrophosphatase (178 aa).

The substrate site is built by Lys30, Arg44, and Tyr56. The Mg(2+) site is built by Asp66, Asp71, and Asp103. Tyr140 is a substrate binding site.

It belongs to the PPase family. In terms of assembly, homohexamer. The cofactor is Mg(2+).

It is found in the cytoplasm. The catalysed reaction is diphosphate + H2O = 2 phosphate + H(+). Its function is as follows. Catalyzes the hydrolysis of inorganic pyrophosphate (PPi) forming two phosphate ions. The polypeptide is Inorganic pyrophosphatase (Pyrococcus horikoshii (strain ATCC 700860 / DSM 12428 / JCM 9974 / NBRC 100139 / OT-3)).